Reading from the N-terminus, the 276-residue chain is Rhomboid protease GlpG (276 aa).

6 consecutive transmembrane segments (helical) span residues 94–114 (GPFT…QNLL), 142–162 (AFMH…WYLG), 169–189 (IGSG…GFVQ), 192–212 (FSGP…GYVW), 229–249 (LILF…GMAI), and 252–272 (GAHV…TLHG). Residue Ser-201 is the Nucleophile of the active site. The active site involves His-254.

The protein belongs to the peptidase S54 family.

It localises to the cell inner membrane. The enzyme catalyses Cleaves type-1 transmembrane domains using a catalytic dyad composed of serine and histidine that are contributed by different transmembrane domains.. In terms of biological role, rhomboid-type serine protease that catalyzes intramembrane proteolysis. The chain is Rhomboid protease GlpG from Klebsiella pneumoniae subsp. pneumoniae (strain ATCC 700721 / MGH 78578).